The following is a 693-amino-acid chain: Glycine--tRNA ligase beta subunit (693 aa).

It belongs to the class-II aminoacyl-tRNA synthetase family. Tetramer of two alpha and two beta subunits.

It localises to the cytoplasm. The enzyme catalyses tRNA(Gly) + glycine + ATP = glycyl-tRNA(Gly) + AMP + diphosphate. The sequence is that of Glycine--tRNA ligase beta subunit from Shouchella clausii (strain KSM-K16) (Alkalihalobacillus clausii).